The primary structure comprises 312 residues: Putative ring-cleaving dioxygenase MhqO (312 aa).

VOC domains are found at residues 7–131 (GIHH…IVER) and 152–269 (GFGG…IATD). Positions 10, 217, and 265 each coordinate Fe cation.

It belongs to the extradiol ring-cleavage dioxygenase family. Fe(2+) serves as cofactor.

It localises to the cytoplasm. Putative ring-cleavage dioxygenase that may contribute to the degradation of aromatic compounds. The protein is Putative ring-cleaving dioxygenase MhqO (mhqO) of Bacillus subtilis (strain 168).